The following is a 355-amino-acid chain: Protein RecA (355 aa).

ATP is bound at residue 65–72 (GPESSGKT).

It belongs to the RecA family.

Its subcellular location is the cytoplasm. Functionally, can catalyze the hydrolysis of ATP in the presence of single-stranded DNA, the ATP-dependent uptake of single-stranded DNA by duplex DNA, and the ATP-dependent hybridization of homologous single-stranded DNAs. It interacts with LexA causing its activation and leading to its autocatalytic cleavage. This Pseudomonas putida (strain GB-1) protein is Protein RecA.